The sequence spans 236 residues: Small ribosomal subunit protein uS2c (236 aa).

It belongs to the universal ribosomal protein uS2 family.

The protein resides in the plastid. Its subcellular location is the chloroplast. The polypeptide is Small ribosomal subunit protein uS2c (rps2) (Piper cenocladum (Ant piper)).